We begin with the raw amino-acid sequence, 377 residues long: Nitric oxide reductase FlRd-NAD(+) reductase (377 aa).

It belongs to the FAD-dependent oxidoreductase family. Requires FAD as cofactor.

The protein localises to the cytoplasm. It carries out the reaction 2 reduced [nitric oxide reductase rubredoxin domain] + NAD(+) + H(+) = 2 oxidized [nitric oxide reductase rubredoxin domain] + NADH. The protein operates within nitrogen metabolism; nitric oxide reduction. Functionally, one of at least two accessory proteins for anaerobic nitric oxide (NO) reductase. Reduces the rubredoxin moiety of NO reductase. This chain is Nitric oxide reductase FlRd-NAD(+) reductase, found in Escherichia fergusonii (strain ATCC 35469 / DSM 13698 / CCUG 18766 / IAM 14443 / JCM 21226 / LMG 7866 / NBRC 102419 / NCTC 12128 / CDC 0568-73).